A 329-amino-acid chain; its full sequence is Cytosolic arginine sensor for mTORC1 subunit 2 (329 aa).

2 consecutive ACT domains span residues 72–140 and 262–322; these read ADAT…HTLS and ELWK…SALK.

It belongs to the GATS family. As to quaternary structure, forms homodimers and heterodimers with CASTOR1. Interacts with the GATOR2 complex which is composed of MIOS, SEC13, SEH1L, WDR24 and WDR59; the interaction is not regulated by arginine. As to expression, widely expressed.

It localises to the cytoplasm. Its subcellular location is the cytosol. Functionally, functions as a negative regulator of the TORC1 signaling pathway through the GATOR complex. As part of homodimers or heterodimers with CASTOR1, directly binds and inhibits the GATOR subcomplex GATOR2 and thereby mTORC1. Does not directly bind arginine, but binding of arginine to CASTOR1 disrupts the interaction of CASTOR2-containing heterodimers with GATOR2 which can in turn activate mTORC1 and the TORC1 signaling pathway. The sequence is that of Cytosolic arginine sensor for mTORC1 subunit 2 from Homo sapiens (Human).